The primary structure comprises 1075 residues: Carbamoyl phosphate synthase large chain (1075 aa).

Residues 2 to 403 (PKRTDIKSIL…SLQKALRGLE (402 aa)) are carboxyphosphate synthetic domain. ATP contacts are provided by R129, R169, G175, G176, E208, L210, E215, G241, I242, H243, Q285, and E299. The ATP-grasp 1 domain occupies 133–328 (DIAMKKIGLD…IAKVAAKLAV (196 aa)). Residues Q285, E299, and N301 each contribute to the Mg(2+) site. Residues Q285, E299, and N301 each coordinate Mn(2+). Residues 404-553 (VGATGFDPKV…YSTYEDECEA (150 aa)) are oligomerization domain. Residues 554–936 (NPSIDRDKIM…AFAKAQLGSN (383 aa)) form a carbamoyl phosphate synthetic domain region. Residues 679 to 870 (QHAVDRLKLK…LAKVAARVMA (192 aa)) enclose the ATP-grasp 2 domain. Positions 715, 754, 756, 761, 786, 787, 788, 789, 829, and 841 each coordinate ATP. Positions 829, 841, and 843 each coordinate Mg(2+). Residues Q829, E841, and N843 each coordinate Mn(2+). An MGS-like domain is found at 937-1075 (STMKKQGRAL…QEMHAQIKKS (139 aa)). The interval 937-1075 (STMKKQGRAL…QEMHAQIKKS (139 aa)) is allosteric domain.

The protein belongs to the CarB family. As to quaternary structure, composed of two chains; the small (or glutamine) chain promotes the hydrolysis of glutamine to ammonia, which is used by the large (or ammonia) chain to synthesize carbamoyl phosphate. Tetramer of heterodimers (alpha,beta)4. The cofactor is Mg(2+). Requires Mn(2+) as cofactor.

It catalyses the reaction hydrogencarbonate + L-glutamine + 2 ATP + H2O = carbamoyl phosphate + L-glutamate + 2 ADP + phosphate + 2 H(+). The enzyme catalyses hydrogencarbonate + NH4(+) + 2 ATP = carbamoyl phosphate + 2 ADP + phosphate + 2 H(+). It participates in amino-acid biosynthesis; L-arginine biosynthesis; carbamoyl phosphate from bicarbonate: step 1/1. It functions in the pathway pyrimidine metabolism; UMP biosynthesis via de novo pathway; (S)-dihydroorotate from bicarbonate: step 1/3. Large subunit of the glutamine-dependent carbamoyl phosphate synthetase (CPSase). CPSase catalyzes the formation of carbamoyl phosphate from the ammonia moiety of glutamine, carbonate, and phosphate donated by ATP, constituting the first step of 2 biosynthetic pathways, one leading to arginine and/or urea and the other to pyrimidine nucleotides. The large subunit (synthetase) binds the substrates ammonia (free or transferred from glutamine from the small subunit), hydrogencarbonate and ATP and carries out an ATP-coupled ligase reaction, activating hydrogencarbonate by forming carboxy phosphate which reacts with ammonia to form carbamoyl phosphate. This chain is Carbamoyl phosphate synthase large chain, found in Salmonella typhimurium (strain LT2 / SGSC1412 / ATCC 700720).